We begin with the raw amino-acid sequence, 108 residues long: UPF0102 protein Shewana3_3881 (108 aa).

Belongs to the UPF0102 family.

In Shewanella sp. (strain ANA-3), this protein is UPF0102 protein Shewana3_3881.